The chain runs to 456 residues: Two pore potassium channel c (456 aa).

Positions 1–19 (MDTEPLLSPLSPSPHLLHP) are enriched in low complexity. Residues 1 to 112 (MDTEPLLSPL…PPSLFDFIGG (112 aa)) form a disordered region. Over 1 to 152 (MDTEPLLSPL…RNPPPPPRRP (152 aa)) the chain is Cytoplasmic. Pro residues predominate over residues 52-67 (HPPPPPPPPPPPPPPP). The chain crosses the membrane as a helical span at residues 153 to 173 (AIVLHAFLFLLAYLAMGVTFY). The pore-forming intramembrane region spans 192–211 (DALYFCIVTLCTIGYGDITP). The chain crosses the membrane as a helical span at residues 223 to 243 (FVLIGFGFVDILLSGMVSYVL). Topologically, residues 244–279 (DLQEHLLITALKNPRSVRKHRHNYIFDLKKGRMRVR) are cytoplasmic. A helical transmembrane segment spans residues 280-300 (MKVALALTVVAICVGVGAAVL). Residues 310-329 (DAVYLAVMSVTTVGYGDHAF) constitute an intramembrane region (pore-forming). Residues 336–356 (LFASAWLLVSTLAVARAFLYL) traverse the membrane as a helical segment. Over 357–456 (AEMRIDKRHR…LNEKKKGKKS (100 aa)) the chain is Cytoplasmic. 2 EF-hand domains span residues 373 to 408 (LSRD…EMGK) and 412 to 447 (KDIM…VTDL). Asp-386, Asp-388, Asn-390, Tyr-392, Glu-397, Asp-425, Lys-431, and Asp-436 together coordinate Ca(2+).

It belongs to the two pore domain potassium channel (TC 1.A.1.7) family. Homodimer.

Its subcellular location is the membrane. Its function is as follows. Inward-rectifying potassium channel. This chain is Two pore potassium channel c (TPKC), found in Oryza sativa subsp. japonica (Rice).